The sequence spans 556 residues: 2-succinyl-5-enolpyruvyl-6-hydroxy-3-cyclohexene-1-carboxylate synthase (556 aa).

This sequence belongs to the TPP enzyme family. MenD subfamily. Homodimer. The cofactor is Mg(2+). Mn(2+) serves as cofactor. Requires thiamine diphosphate as cofactor.

It catalyses the reaction isochorismate + 2-oxoglutarate + H(+) = 5-enolpyruvoyl-6-hydroxy-2-succinyl-cyclohex-3-ene-1-carboxylate + CO2. It participates in quinol/quinone metabolism; 1,4-dihydroxy-2-naphthoate biosynthesis; 1,4-dihydroxy-2-naphthoate from chorismate: step 2/7. Its pathway is quinol/quinone metabolism; menaquinone biosynthesis. Catalyzes the thiamine diphosphate-dependent decarboxylation of 2-oxoglutarate and the subsequent addition of the resulting succinic semialdehyde-thiamine pyrophosphate anion to isochorismate to yield 2-succinyl-5-enolpyruvyl-6-hydroxy-3-cyclohexene-1-carboxylate (SEPHCHC). This Salmonella paratyphi A (strain AKU_12601) protein is 2-succinyl-5-enolpyruvyl-6-hydroxy-3-cyclohexene-1-carboxylate synthase.